Consider the following 131-residue polypeptide: ER membrane protein complex subunit 5 (131 aa).

The Cytoplasmic segment spans residues 1-3 (MAP). Residues 4-22 (SLWKGLVGIGLFALAHAAL) traverse the membrane as a helical segment. Topologically, residues 23–43 (SAAQHRSYMRLTEKEDESLPI) are lumenal. Residues 44-63 (DIVLQTLLAFAVTCYGIVHI) traverse the membrane as a helical segment. The Cytoplasmic segment spans residues 64 to 131 (AGEFKDMDAT…KLRKLESLRR (68 aa)). Phosphoserine is present on Ser120.

Belongs to the membrane magnesium transporter (TC 1.A.67) family. Component of the ER membrane protein complex (EMC).

Its subcellular location is the endoplasmic reticulum membrane. The protein localises to the golgi apparatus membrane. It localises to the early endosome membrane. Its function is as follows. Part of the endoplasmic reticulum membrane protein complex (EMC) that enables the energy-independent insertion into endoplasmic reticulum membranes of newly synthesized membrane proteins. Preferentially accommodates proteins with transmembrane domains that are weakly hydrophobic or contain destabilizing features such as charged and aromatic residues. Involved in the cotranslational insertion of multi-pass membrane proteins in which stop-transfer membrane-anchor sequences become ER membrane spanning helices. It is also required for the post-translational insertion of tail-anchored/TA proteins in endoplasmic reticulum membranes. By mediating the proper cotranslational insertion of N-terminal transmembrane domains in an N-exo topology, with translocated N-terminus in the lumen of the ER, controls the topology of multi-pass membrane proteins like the G protein-coupled receptors. By regulating the insertion of various proteins in membranes, it is indirectly involved in many cellular processes. May be involved in Mg(2+) transport. The protein is ER membrane protein complex subunit 5 of Pongo abelii (Sumatran orangutan).